The sequence spans 318 residues: Inner membrane protein YbhN (318 aa).

Topologically, residues 1-13 (MSKSHPRWRLAKK) are periplasmic. The helical transmembrane segment at 14–34 (ILTWLFFIAVIVLLVVYAKKV) threads the bilayer. Over 35 to 50 (DWEEVWKVIRDYNRVA) the chain is Cytoplasmic. The helical transmembrane segment at 51–71 (LLSAVGLVVVSYLIYGCYDLL) threads the bilayer. The Periplasmic portion of the chain corresponds to 72–85 (ARFYCGHKLAKRQV). A helical membrane pass occupies residues 86–106 (MLVSFICYAFNLTLSTWVGGI). Topologically, residues 107–125 (GMRYRLYSRLGLPGSTITR) are cytoplasmic. Residues 126-146 (IFSLSITTNWLGYILLAGIIF) traverse the membrane as a helical segment. The Periplasmic portion of the chain corresponds to 147-165 (TAGVVELPDHWYVDQTTLR). Residues 166 to 186 (ILGIGLLMIIAVYLWFCAFAK) traverse the membrane as a helical segment. The Cytoplasmic segment spans residues 187–205 (HRHMTIKGQKLVLPSWKFA). The chain crosses the membrane as a helical span at residues 206–226 (LAQMLISSVNWMVMGAIIWLL). The Periplasmic segment spans residues 227–233 (LGQSVNY). Transmembrane regions (helical) follow at residues 234–254 (FFVL…HIPA) and 255–275 (GIGV…TSKG). At 276–277 (TI) the chain is on the periplasmic side. A helical membrane pass occupies residues 278 to 298 (IAALLAYRVLYYFIPLLLALI). The Cytoplasmic segment spans residues 299 to 318 (CYLLLESQAKKLRAKNEAAM).

It to Synechocystis PCC 6803 slr0712.

The protein resides in the cell inner membrane. This Escherichia coli (strain K12) protein is Inner membrane protein YbhN (ybhN).